A 258-amino-acid chain; its full sequence is Putative cysteine-rich repeat secretory protein 61 (258 aa).

The first 31 residues, methionine 1–serine 31, serve as a signal peptide directing secretion. 2 Gnk2-homologous domains span residues tyrosine 38–phenylalanine 140 and aspartate 146–phenylalanine 253.

Belongs to the cysteine-rich repeat secretory protein family.

It localises to the secreted. This Arabidopsis thaliana (Mouse-ear cress) protein is Putative cysteine-rich repeat secretory protein 61 (CRRSP61).